The primary structure comprises 172 residues: Large ribosomal subunit protein bL21m (172 aa).

A mitochondrion-targeting transit peptide spans 1 to 20; it reads MIRNIGSNLMKSSSSILLRN.

This sequence belongs to the bacterial ribosomal protein bL21 family.

The protein resides in the mitochondrion. This chain is Large ribosomal subunit protein bL21m (mrpl21), found in Dictyostelium discoideum (Social amoeba).